We begin with the raw amino-acid sequence, 473 residues long: Probable serine/threonine-protein kinase glkA (473 aa).

The disordered stretch occupies residues 1-84 (MTIPTDNNSS…QSSSTATVNS (84 aa)). The segment covering 7-84 (NNSSNNKGYN…QSSSTATVNS (78 aa)) has biased composition (low complexity). The Protein kinase domain occupies 91–366 (YEIIKQVGQG…IDEIIAHPFL (276 aa)). ATP contacts are provided by residues 97-105 (VGQGTFGKV) and Lys-119. Asp-208 acts as the Proton acceptor in catalysis. Disordered regions lie at residues 389 to 418 (GKSS…SNNK) and 437 to 473 (SSNL…TNTI). Residues 442 to 466 (SIDNSNNGKSSSSSNNIPSLNNSNN) show a composition bias toward low complexity.

Belongs to the protein kinase superfamily. CMGC Ser/Thr protein kinase family. GSK-3 subfamily.

It carries out the reaction L-seryl-[tau protein] + ATP = O-phospho-L-seryl-[tau protein] + ADP + H(+). It catalyses the reaction L-threonyl-[tau protein] + ATP = O-phospho-L-threonyl-[tau protein] + ADP + H(+). The polypeptide is Probable serine/threonine-protein kinase glkA (glkA) (Dictyostelium discoideum (Social amoeba)).